Reading from the N-terminus, the 259-residue chain is Type III pantothenate kinase (259 aa).

Position 6–13 (6–13 (DVGNTNIV)) interacts with ATP. Substrate contacts are provided by residues tyrosine 100 and 107–110 (GADR). Catalysis depends on aspartate 109, which acts as the Proton acceptor. Aspartate 129 serves as a coordination point for K(+). Position 132 (threonine 132) interacts with ATP. Threonine 184 provides a ligand contact to substrate.

It belongs to the type III pantothenate kinase family. As to quaternary structure, homodimer. NH4(+) is required as a cofactor. The cofactor is K(+).

Its subcellular location is the cytoplasm. The catalysed reaction is (R)-pantothenate + ATP = (R)-4'-phosphopantothenate + ADP + H(+). The protein operates within cofactor biosynthesis; coenzyme A biosynthesis; CoA from (R)-pantothenate: step 1/5. In terms of biological role, catalyzes the phosphorylation of pantothenate (Pan), the first step in CoA biosynthesis. This Clostridium perfringens (strain ATCC 13124 / DSM 756 / JCM 1290 / NCIMB 6125 / NCTC 8237 / Type A) protein is Type III pantothenate kinase.